Consider the following 499-residue polypeptide: Glucooligosaccharide oxidase (499 aa).

Positions Met-1–Arg-25 are cleaved as a signal peptide. The cysteines at positions 31 and 80 are disulfide-linked. The region spanning Val-58–Ala-230 is the FAD-binding PCMH-type domain. Positions His-95–Cys-155 form a cross-link, 6-(S-cysteinyl)-8alpha-(pros-histidyl)-FAD (His-Cys). 3 residues coordinate substrate: Tyr-97, Thr-154, and Arg-270. N-linked (GlcNAc...) asparagine glycosylation is found at Asn-330 and Asn-366. 2 residues coordinate substrate: Gln-378 and Gln-409. Asn-419 carries N-linked (GlcNAc...) asparagine glycosylation. A substrate-binding site is contributed by Tyr-454. Tyr-454 functions as the Proton acceptor in the catalytic mechanism.

This sequence belongs to the oxygen-dependent FAD-linked oxidoreductase family. Requires FAD as cofactor. Post-translationally, the FAD cofactor is bound via a bicovalent 6-S-cysteinyl, 8alpha-N1-histidyl FAD linkage.

Its subcellular location is the secreted. It catalyses the reaction beta-lactose + O2 = lactobiono-1,5-lactone + H2O2. The catalysed reaction is D-cellobiose + O2 = D-cellobiono-1,5-lactone + H2O2. It carries out the reaction D-cellotriose + O2 = D-cellotriono-1,5-lactone + H2O2. The enzyme catalyses D-cellotetraose + O2 = D-cellotetraono-1,5-lactone + H2O2. It catalyses the reaction D-cellopentaose + O2 = D-cellopentaono-1,5-lactone + H2O2. The catalysed reaction is D-cellohexaose + O2 = D-cellohexaono-1,5-lactone + H2O2. In terms of biological role, catalyzes the selective oxidation of C1 hydroxyl moieties on mono- and disaccharides with concomitant reduction of molecular oxygen to hydrogen peroxide. This results in the formation of the corresponding lactones, which typically undergo spontaneous hydrolysis. Glucooligosaccharide oxidase is able to oxidize the monosaccharide D-glucose as well as the disaccharides maltose, cellobiose, and lactose. In addition, it shows high selectivity for cello- and maltooligosaccharides, indicating that glucooligosaccharide oxidase prefers oligosaccharides with a beta-D-glucosyl unit on the reducing end and additional sugar units linked by alpha- or beta-1,4 glucosidic bonds. In Sarocladium strictum (Black bundle disease fungus), this protein is Glucooligosaccharide oxidase (gluO).